Consider the following 314-residue polypeptide: Ribonuclease Z (314 aa).

Residues H61, H63, D65, H66, H137, D207, and H263 each coordinate Zn(2+). D65 acts as the Proton acceptor in catalysis.

Belongs to the RNase Z family. In terms of assembly, homodimer. Requires Zn(2+) as cofactor.

It catalyses the reaction Endonucleolytic cleavage of RNA, removing extra 3' nucleotides from tRNA precursor, generating 3' termini of tRNAs. A 3'-hydroxy group is left at the tRNA terminus and a 5'-phosphoryl group is left at the trailer molecule.. Its function is as follows. Zinc phosphodiesterase, which displays some tRNA 3'-processing endonuclease activity. Probably involved in tRNA maturation, by removing a 3'-trailer from precursor tRNA. The sequence is that of Ribonuclease Z from Thermococcus kodakarensis (strain ATCC BAA-918 / JCM 12380 / KOD1) (Pyrococcus kodakaraensis (strain KOD1)).